A 416-amino-acid chain; its full sequence is Trifolitoxin-processing protein TfxD (416 aa).

Transmembrane regions (helical) follow at residues 24–44 (MIPN…ALQV), 48–68 (VLIT…LICM), 79–99 (VFAA…ALIA), 114–134 (IAFI…AYCA), 153–173 (SSLI…FAGT), 176–196 (SIIS…LAYA), 230–250 (ASFI…VVAA), 255–275 (IAVF…LAIG), 295–315 (VLIA…VGLI), 322–342 (IFAL…CDGL), and 372–392 (VILA…ALVL).

The protein localises to the cell membrane. Its function is as follows. The actions of the proteins TfxB, TfxD and TfxF are implicated in the processing of the inactive trifolitoxin (TfxA) precursor into the active peptide. The sequence is that of Trifolitoxin-processing protein TfxD (tfxD) from Rhizobium leguminosarum bv. trifolii.